Here is a 61-residue protein sequence, read N- to C-terminus: Large ribosomal subunit protein bL32 (61 aa).

Residues 1-16 (MAVPKRKTSPSKRGMR) are compositionally biased toward basic residues. Residues 1–33 (MAVPKRKTSPSKRGMRRSADGLKAPTYVEDKNS) are disordered.

Belongs to the bacterial ribosomal protein bL32 family.

The protein is Large ribosomal subunit protein bL32 of Allorhizobium ampelinum (strain ATCC BAA-846 / DSM 112012 / S4) (Agrobacterium vitis (strain S4)).